We begin with the raw amino-acid sequence, 324 residues long: Non-homologous end joining protein Ku 1 (324 aa).

The 184-residue stretch at 10 to 193 (INFGLVTIPV…AKPSDKEIQM (184 aa)) folds into the Ku domain. Residues 256–324 (QARRGRGGQV…SGGRRRRRAS (69 aa)) are disordered. Residues 281-292 (AELDKKAKELGI) show a composition bias toward basic and acidic residues.

This sequence belongs to the prokaryotic Ku family. As to quaternary structure, homodimer. Interacts with LigD.

In terms of biological role, with LigD forms a non-homologous end joining (NHEJ) DNA repair enzyme, which repairs dsDNA breaks with reduced fidelity. Binds linear dsDNA with 5'- and 3'- overhangs but not closed circular dsDNA nor ssDNA. Recruits and stimulates the ligase activity of LigD. The chain is Non-homologous end joining protein Ku 1 from Saccharopolyspora erythraea (strain ATCC 11635 / DSM 40517 / JCM 4748 / NBRC 13426 / NCIMB 8594 / NRRL 2338).